A 565-amino-acid polypeptide reads, in one-letter code: Berberine bridge enzyme-like C-2 (565 aa).

The first 17 residues, 1 to 17, serve as a signal peptide directing secretion; the sequence is MFPIIILISFSFTFLFA. N-linked (GlcNAc...) asparagine glycosylation is found at asparagine 28 and asparagine 40. Residues cysteine 32 and cysteine 94 are joined by a disulfide bond. An FAD-binding PCMH-type domain is found at 72–248; it reads YMPKPTVIIL…YAWKIRLLKV (177 aa). Histidine 109 carries the post-translational modification Pros-8alpha-FAD histidine. Asparagine 363 and asparagine 502 each carry an N-linked (GlcNAc...) asparagine glycan.

This sequence belongs to the oxygen-dependent FAD-linked oxidoreductase family. It depends on FAD as a cofactor.

It is found in the vacuole. It participates in alkaloid biosynthesis; nicotine biosynthesis. Functionally, involved in the biosynthesis of pyridine alkaloid natural products, leading mainly to the production of anabasine, anatabine, nicotine and nornicotine, effective deterrents against herbivores with antiparasitic and pesticide properties (neurotoxins); nornicotine serves as the precursor in the synthesis of the carcinogen compound N'-nitrosonornicotine (NNN). Catalyzes a late oxidation step subsequent to the pyridine ring condensation reaction in the biosynthesis of alkaloids. In Nicotiana tabacum (Common tobacco), this protein is Berberine bridge enzyme-like C-2.